A 369-amino-acid polypeptide reads, in one-letter code: Ribosomal RNA large subunit methyltransferase M (369 aa).

S-adenosyl-L-methionine-binding positions include Ser198, 231-234 (APGG), Asp250, Asp270, and Asp287. The Proton acceptor role is filled by Lys316.

This sequence belongs to the class I-like SAM-binding methyltransferase superfamily. RNA methyltransferase RlmE family. RlmM subfamily. Monomer.

It is found in the cytoplasm. The enzyme catalyses cytidine(2498) in 23S rRNA + S-adenosyl-L-methionine = 2'-O-methylcytidine(2498) in 23S rRNA + S-adenosyl-L-homocysteine + H(+). Functionally, catalyzes the 2'-O-methylation at nucleotide C2498 in 23S rRNA. This chain is Ribosomal RNA large subunit methyltransferase M, found in Idiomarina loihiensis (strain ATCC BAA-735 / DSM 15497 / L2-TR).